A 104-amino-acid polypeptide reads, in one-letter code: AVIToxin-VAR1 (104 aa).

A signal peptide spans 1–19; that stretch reads MRSLLCAPLLLLLLSAGES. Intrachain disulfides connect Cys-26-Cys-38, Cys-32-Cys-50, Cys-37-Cys-78, Cys-60-Cys-86, and Cys-80-Cys-96.

Belongs to the AVIT (prokineticin) family. In terms of tissue distribution, expressed by the venom gland.

It is found in the secreted. Its function is as follows. Potent agonist for both PKR1/PROKR1 and PKR2/PROKR2. Potently contracts gastrointestinal (GI) smooth muscle. The polypeptide is AVIToxin-VAR1 (Varanus varius (Lace monitor lizard)).